The primary structure comprises 346 residues: Phosphate acyltransferase (346 aa).

Belongs to the PlsX family. As to quaternary structure, homodimer. Probably interacts with PlsY.

Its subcellular location is the cytoplasm. It carries out the reaction a fatty acyl-[ACP] + phosphate = an acyl phosphate + holo-[ACP]. The protein operates within lipid metabolism; phospholipid metabolism. Catalyzes the reversible formation of acyl-phosphate (acyl-PO(4)) from acyl-[acyl-carrier-protein] (acyl-ACP). This enzyme utilizes acyl-ACP as fatty acyl donor, but not acyl-CoA. The protein is Phosphate acyltransferase of Brucella melitensis biotype 2 (strain ATCC 23457).